Here is a 146-residue protein sequence, read N- to C-terminus: Transcription antitermination protein NusB (146 aa).

This sequence belongs to the NusB family.

In terms of biological role, involved in transcription antitermination. Required for transcription of ribosomal RNA (rRNA) genes. Binds specifically to the boxA antiterminator sequence of the ribosomal RNA (rrn) operons. The polypeptide is Transcription antitermination protein NusB (Solibacter usitatus (strain Ellin6076)).